Here is a 393-residue protein sequence, read N- to C-terminus: NAD(P)H-quinone oxidoreductase subunit H, chloroplastic (393 aa).

The protein belongs to the complex I 49 kDa subunit family. As to quaternary structure, NDH is composed of at least 16 different subunits, 5 of which are encoded in the nucleus.

It is found in the plastid. The protein resides in the chloroplast thylakoid membrane. It carries out the reaction a plastoquinone + NADH + (n+1) H(+)(in) = a plastoquinol + NAD(+) + n H(+)(out). It catalyses the reaction a plastoquinone + NADPH + (n+1) H(+)(in) = a plastoquinol + NADP(+) + n H(+)(out). In terms of biological role, NDH shuttles electrons from NAD(P)H:plastoquinone, via FMN and iron-sulfur (Fe-S) centers, to quinones in the photosynthetic chain and possibly in a chloroplast respiratory chain. The immediate electron acceptor for the enzyme in this species is believed to be plastoquinone. Couples the redox reaction to proton translocation, and thus conserves the redox energy in a proton gradient. The chain is NAD(P)H-quinone oxidoreductase subunit H, chloroplastic from Barbarea verna (Land cress).